The primary structure comprises 421 residues: ATP-dependent RNA helicase RhlB (421 aa).

Residues 9–37 carry the Q motif motif; it reads QKFSDFALHPKVVEALEKKGFHNCTPIQA. Residues 40–219 enclose the Helicase ATP-binding domain; the sequence is LPLTLAGRDV…FEQMNNAEYI (180 aa). 53–60 contributes to the ATP binding site; that stretch reads AQTGTGKT. A DEAD box motif is present at residues 165-168; the sequence is DEAD. A Helicase C-terminal domain is found at 245–390; that stretch reads RLLQTLIEEE…VSKYNPDALM (146 aa). Residues 392-421 form a disordered region; it reads DLPKPLRLTRPRTGNGPRRTGTPRNRRRSG. Residues 402 to 414 show a composition bias toward low complexity; it reads PRTGNGPRRTGTP.

Belongs to the DEAD box helicase family. RhlB subfamily. Component of the RNA degradosome, which is a multiprotein complex involved in RNA processing and mRNA degradation.

It is found in the cytoplasm. It carries out the reaction ATP + H2O = ADP + phosphate + H(+). DEAD-box RNA helicase involved in RNA degradation. Has RNA-dependent ATPase activity and unwinds double-stranded RNA. The chain is ATP-dependent RNA helicase RhlB from Escherichia coli O17:K52:H18 (strain UMN026 / ExPEC).